A 112-amino-acid chain; its full sequence is UPF0060 membrane protein SAV_4756 (112 aa).

A run of 4 helical transmembrane segments spans residues A8–V28, G33–L53, I62–D82, and V91–G111.

This sequence belongs to the UPF0060 family.

It localises to the cell membrane. The protein is UPF0060 membrane protein SAV_4756 of Streptomyces avermitilis (strain ATCC 31267 / DSM 46492 / JCM 5070 / NBRC 14893 / NCIMB 12804 / NRRL 8165 / MA-4680).